Consider the following 245-residue polypeptide: DNA polymerase sliding clamp (245 aa).

It belongs to the PCNA family. In terms of assembly, homotrimer. The subunits circularize to form a toroid; DNA passes through its center. Replication factor C (RFC) is required to load the toroid on the DNA.

Sliding clamp subunit that acts as a moving platform for DNA processing. Responsible for tethering the catalytic subunit of DNA polymerase and other proteins to DNA during high-speed replication. This is DNA polymerase sliding clamp from Archaeoglobus fulgidus (strain ATCC 49558 / DSM 4304 / JCM 9628 / NBRC 100126 / VC-16).